A 367-amino-acid polypeptide reads, in one-letter code: Selenoprotein Pa (367 aa).

The N-terminal stretch at 1–19 is a signal peptide; the sequence is MWKALSLTLALCLLVGCSA. Position 59 (Sec59) is a non-standard amino acid, selenocysteine. A glycan (N-linked (GlcNAc...) asparagine) is linked at Asn109. The span at 191–220 shows a compositional bias: basic and acidic residues; sequence EVNKPVEEEPRQDHGHHEHGHHEHQGEAER. Residues 191 to 241 form a disordered region; it reads EVNKPVEEEPRQDHGHHEHGHHEHQGEAERHRHGHHHPHHHHHHHRGQQQV. Positions 221-237 are enriched in basic residues; sequence HRHGHHHPHHHHHHHRG. Residues Sec267, Sec273, Sec279, Sec290, Sec292, Sec294, Sec310, Sec320, Sec322, Sec336, Sec338, Sec346, Sec353, Sec355, Sec362, and Sec364 are each a non-standard amino acid (selenocysteine). Positions 309–367 are disordered; sequence LUHCDEPLPASUPUQGLKEQDNHIKETUQURPAPPAEUELSQPTUVUPAGDATUGURKK. Over residues 326–336 the composition is skewed to basic and acidic residues; that stretch reads KEQDNHIKETU.

This sequence belongs to the selenoprotein P family.

The protein localises to the secreted. Might be responsible for some of the extracellular antioxidant defense properties of selenium or might be involved in the transport of selenium. In Danio rerio (Zebrafish), this protein is Selenoprotein Pa (sepp1a).